The following is a 191-amino-acid chain: Calcium-binding protein L (191 aa).

A lipid anchor (N-myristoyl glycine) is attached at G2. 3 EF-hand domains span residues 25–59 (EQVS…RFKD), 60–95 (YDDA…ITKS), and 96–131 (PVSD…ALNT). Residues D73, D75, N77, R79, and E84 each contribute to the Ca(2+) site.

The protein belongs to the recoverin family.

The chain is Calcium-binding protein L (cbpL) from Dictyostelium discoideum (Social amoeba).